The primary structure comprises 180 residues: MRSFCCCFYPAAVALHCVLLFYTFFLLFRASALRRRVVSGSKGSAALALCRQFEQLSASRRERAEECRTTQLRYHYHRNGAQSRSLCAAVLCCKRSYIPRPNFSCFSLVFPVGQRFAAARTRFGPTLVASWPLCNDSETKVLTKWPSCSLIGRRSVPRGQPKFSRENPRALSPSLLGEMR.

The N-terminal stretch at 1 to 32 (MRSFCCCFYPAAVALHCVLLFYTFFLLFRASA) is a signal peptide. Propeptides lie at residues 33–35 (LRR) and 152–180 (GRRS…GEMR). The interval 155 to 180 (SVPRGQPKFSRENPRALSPSLLGEMR) is disordered.

As to expression, enriched expression in the embryonic and larval nervous systems. Strongly expressed in two large neurons that project over all the lobes of the mushroom bodies.

Its subcellular location is the secreted. In terms of biological role, required for associative learning and memory in adults. Expression pattern suggests a modulatory role in memory formation. Controls neurotransmitter-mediated signaling pathways associated with the structure of the larval peripheral nerve. The protein is Amnesiac neuropeptides (amn) of Drosophila melanogaster (Fruit fly).